A 61-amino-acid chain; its full sequence is Small ribosomal subunit protein uS14 (61 aa).

Zn(2+) is bound by residues Cys-24, Cys-27, Cys-40, and Cys-43.

It belongs to the universal ribosomal protein uS14 family. Zinc-binding uS14 subfamily. In terms of assembly, part of the 30S ribosomal subunit. Contacts proteins S3 and S10. Requires Zn(2+) as cofactor.

In terms of biological role, binds 16S rRNA, required for the assembly of 30S particles and may also be responsible for determining the conformation of the 16S rRNA at the A site. The polypeptide is Small ribosomal subunit protein uS14 (Mycobacterium leprae (strain Br4923)).